A 162-amino-acid chain; its full sequence is MSVLAIIFLLNLKPTIYSIVGIFLIIILDVTVAVALYFLLRPVSKNISMLMSLFRIVYAAIFTTALYKIHDLTAFYSILDLGYIFFGIHLFLLGFLVYKSGYMPKWLGALIFIASTGYIIDPLLRFSGYAVEIGMYTFFGEVLFAFWLVIKGRKLSEVVSTP.

The next 5 membrane-spanning stretches (helical) occupy residues 15-40, 47-66, 76-98, 105-124, and 128-150; these read TIYS…YFLL, ISML…TTAL, YSIL…FLVY, KWLG…DPLL, and GYAV…WLVI.

It is found in the cell membrane. This is an uncharacterized protein from Archaeoglobus fulgidus (strain ATCC 49558 / DSM 4304 / JCM 9628 / NBRC 100126 / VC-16).